The sequence spans 396 residues: Putative O-antigen transporter (396 aa).

11 consecutive transmembrane segments (helical) span residues 5–25, 32–52, 82–102, 107–127, 137–157, 163–183, 211–231, 286–306, 322–342, 348–368, and 372–392; these read ILLL…VLPY, IETF…SLIV, IVKL…LMYV, LIYP…FATW, AVVI…FILV, IVAA…ISIY, FFLS…LLSF, AIFG…LTTI, MFLL…MLIP, ILSR…FPLV, and GAWG…LFML.

Belongs to the polysaccharide synthase family.

Its subcellular location is the cell inner membrane. Its pathway is bacterial outer membrane biogenesis; LPS O-antigen biosynthesis. In terms of biological role, may be involved in the translocation process of the nascent O-polysaccharide molecules and/or its ligation to lipid A core units. The sequence is that of Putative O-antigen transporter (rfbX) from Shigella dysenteriae.